The following is a 222-amino-acid chain: Histone H1.5 (222 aa).

The span at methionine 1–glutamate 16 shows a compositional bias: low complexity. Positions methionine 1–glycine 55 are disordered. Serine 2 is modified (N-acetylserine). Phosphoserine is present on serine 2. Position 17 is an N6-acetyllysine (lysine 17). Position 18 is a phosphoserine (serine 18). The span at alanine 20–alanine 34 shows a compositional bias: basic residues. Lysine 26 carries the N6-methyllysine modification. Lysine 33 is modified (N6-(beta-hydroxybutyryl)lysine; alternate). N6-succinyllysine; alternate is present on lysine 33. Threonine 35 is modified (phosphothreonine). One can recognise an H15 domain in the interval threonine 35–lysine 108. N6-acetyllysine is present on lysine 45. Lysine 51 bears the N6-(beta-hydroxybutyryl)lysine mark. A Citrulline modification is found at arginine 53. An N6-(beta-hydroxybutyryl)lysine modification is found at lysine 63. At lysine 74 the chain carries N6-acetyllysine. N6-(beta-hydroxybutyryl)lysine is present on residues lysine 84, lysine 89, and lysine 105. The tract at residues glutamine 94–lysine 222 is disordered. A compositionally biased stretch (basic residues) spans lysine 118–lysine 129. A phosphothreonine mark is found at threonine 134 and threonine 151. Residues lysine 136–lysine 157 show a composition bias toward basic residues. An N6-acetyllysine modification is found at lysine 164. Residues lysine 165 to threonine 183 show a composition bias toward basic residues. Residues serine 169 and serine 185 each carry the phosphoserine modification. Positions lysine 190–lysine 222 are enriched in basic residues.

Belongs to the histone H1/H5 family. As to quaternary structure, interacts with MSX1. Post-translationally, H1 histones are progressively phosphorylated during the cell cycle, becoming maximally phosphorylated during late G2 phase and M phase, and being dephosphorylated sharply thereafter. Citrullination at Arg-53 (H1R54ci) by PADI4 takes place within the DNA-binding site of H1 and results in its displacement from chromatin and global chromatin decondensation, thereby promoting pluripotency and stem cell maintenance.

The protein localises to the nucleus. It localises to the chromosome. Histone H1 protein binds to linker DNA between nucleosomes forming the macromolecular structure known as the chromatin fiber. Histones H1 are necessary for the condensation of nucleosome chains into higher-order structured fibers. Also acts as a regulator of individual gene transcription through chromatin remodeling, nucleosome spacing and DNA methylation. The polypeptide is Histone H1.5 (H1-5) (Rattus norvegicus (Rat)).